We begin with the raw amino-acid sequence, 545 residues long: MSYSIGIDYGTASGRVFLINTTNGQVVSKFVKPYTHGVIESELNGLKIPHTYALQNSNDYLEIMEEGISYIVRESKIDPDNIVGIGIDFTSSTIIFTDENLNPVHNLKQFKNNPHAYVKLWKHHGAYKEAEKLYQTAIENNNKWLGHYGYNVSSEWMIPKIMEVMNRAPEIMEKTAYIMEAGDWIVNKLTNKNVRSNCGLGFKAFWEEETGFHYDLFDKIDPKLSKVIQDKVSAPVVNIGEAVGKLDDKMAQKLGLSKETMVSPFIIDAHASLLGIGSEKDKEMTMVMGTSTCHLMLNEKQHQVPGISGSVKGAIIPELFAYEAGQSAVGDLFEYVAKQAPKSYVDEAENRNMTVFELMNEKIKHQMPGESGLIALDWHNGNRSVLSDSNLTGCIFGLTLQTKHEDIYRAYLEATAFGTKMIMQQYQDWHMEVEKVFACGGIPKKNAVMMDIYANVLNKKLIVMDSEYAPAIGAAILGAVSGGAHNSINDAVDAMKEPILYEINPEAEKVQRYETLFKAYKALHDIHGYKKANIMKDIQSLRVEG.

Belongs to the ribulokinase family.

The catalysed reaction is D-ribulose + ATP = D-ribulose 5-phosphate + ADP + H(+). It catalyses the reaction L-ribulose + ATP = L-ribulose 5-phosphate + ADP + H(+). Its pathway is carbohydrate degradation; L-arabinose degradation via L-ribulose; D-xylulose 5-phosphate from L-arabinose (bacterial route): step 2/3. The polypeptide is Ribulokinase (Staphylococcus aureus (strain USA300)).